A 72-amino-acid chain; its full sequence is Crustacean hyperglycemic hormone (72 aa).

Q1 carries the pyrrolidone carboxylic acid; partial modification. 3 disulfide bridges follow: C7/C43, C23/C39, and C26/C52. V72 is subject to Valine amide.

It belongs to the arthropod CHH/MIH/GIH/VIH hormone family. Post-translationally, the N-terminus forms pyrrolidone carboxylic acid in isoform CHH-II and is free in isoform CHH-I. Produced by the medulla terminalis X-organ in the eyestalks and transported to the sinus gland where they are stored and released.

It localises to the secreted. In terms of biological role, hormone found in the sinus gland of isopods and decapods which controls the blood sugar level. Has a secretagogue action over the amylase released from the midgut gland. May act as a stress hormone and may be involved in the control of molting and reproduction. This chain is Crustacean hyperglycemic hormone, found in Cancer pagurus (Rock crab).